The primary structure comprises 774 residues: E3 ubiquitin-protein ligase RFWD3 (774 aa).

2 positions are modified to phosphoserine; by ATM and ATR: Ser-46 and Ser-63. Disordered stretches follow at residues 95–116, 139–225, and 257–280; these read NPRT…PASS, PSSS…AEYG, and GGKT…ASMD. The segment covering 106–116 has biased composition (polar residues); the sequence is SDGNHTIPASS. Residues 150-162 are compositionally biased toward basic residues; it reads RTRRRVSASRRAR. Positions 211–221 are enriched in low complexity; sequence SSSSDSDSDSS. The segment at 287–331 adopts an RING-type; degenerate zinc-finger fold; that stretch reads CTICLEQWTNAGDHRLSALRCGHLFGYRCISTWLKGQVRKCPQCN. The stretch at 361-413 forms a coiled coil; it reads SLLKEQMLRKQAELESAQCRLQLQVLTDKCTRLQRRVQDLQKLTSHQSQNLQQ. 3 WD repeats span residues 495 to 537, 539 to 577, and 583 to 628; these read MHGK…QTYN, GRPV…SHVQ, and KARC…SHWP.

As to quaternary structure, interacts with MDM2 and p53/TP53. Binds to the RPA complex via direct interaction with RPA2. Interacts with RAD51. In terms of processing, phosphorylated at Ser-46 and Ser-63 upon DNA damage by ATM or ATR. ATM phosphorylation occurs at early times upon DNA damage, while ATR is the major kinase at later times. Phosphorylation by ATM and ATR is required to stabilize p53/TP53. Part of the phosphorylation depends upon RPA2 presence.

It localises to the nucleus. It is found in the PML body. The protein resides in the cytoplasm. It carries out the reaction S-ubiquitinyl-[E2 ubiquitin-conjugating enzyme]-L-cysteine + [acceptor protein]-L-lysine = [E2 ubiquitin-conjugating enzyme]-L-cysteine + N(6)-ubiquitinyl-[acceptor protein]-L-lysine.. Its pathway is protein modification; protein ubiquitination. In terms of biological role, E3 ubiquitin-protein ligase required for the repair of DNA interstrand cross-links (ICL) in response to DNA damage. Plays a key role in RPA-mediated DNA damage signaling and repair. Acts by mediating ubiquitination of the RPA complex (RPA1, RPA2 and RPA3 subunits) and RAD51 at stalled replication forks, leading to remove them from DNA damage sites and promote homologous recombination. Also mediates the ubiquitination of p53/TP53 in the late response to DNA damage, and acts as a positive regulator of p53/TP53 stability, thereby regulating the G1/S DNA damage checkpoint. May act by catalyzing the formation of short polyubiquitin chains on p53/TP53 that are not targeted to the proteasome. In response to ionizing radiation, interacts with MDM2 and enhances p53/TP53 ubiquitination, possibly by restricting MDM2 from extending polyubiquitin chains on ubiquitinated p53/TP53. Required to translesion DNA synthesis across DNA-protein cross-link adducts by catalyzing ubiquitination of proteins on single-stranded DNA (ssDNA). The chain is E3 ubiquitin-protein ligase RFWD3 from Homo sapiens (Human).